A 504-amino-acid polypeptide reads, in one-letter code: MSLICSISNEVPEHPCVSPVSNHVYERRLIEKYIAENGTDPINNQPLSEEQLIDIKVAHPIRPKPPSATSIPAILKALQDEWDAVMLHSFTLRQQLQTTRQELSHALYQHDAACRVIARLTKEVTAAREALATLKPQAGLIVPQAVPSSQPSVVGAGEPMDLGELVGMTPEIIQKLQDKATVLTTERKKRGKTVPEELVKPEELSKYRQVASHVGLHSASIPGILALDLCPSDTNKILTGGADKNVVVFDKSSEQILATLKGHTKKVTSVVFHPSQDLVFSASPDATIRIWSVPNASCVQVVRAHESAVTGLSLHATGDYLLSSSDDQYWAFSDIQTGRVLTKVTDETSGCSLTCAQFHPDGLIFGTGTMDSQIKIWDLKERTNVANFPGHSGPITSIAFSENGYYLATAADDSSVKLWDLRKLKNFKTLQLDNNFEVKSLIFDQSGTYLALGGTDVQIYICKQWTEILHFTEHSGLTTGVAFGHHAKFIASTGMDRSLKFYSL.

Ser-2 is modified (N-acetylserine). The U-box domain occupies 2–73; the sequence is SLICSISNEV…KPPSATSIPA (72 aa). A may mediate interaction with PSMC5 region spans residues 68–223; it reads ATSIPAILKA…VGLHSASIPG (156 aa). Residues Lys-122, Lys-179, Lys-244, and Lys-261 each carry the N6-acetyllysine modification. The WD 1 repeat unit spans residues 219 to 259; the sequence is ASIPGILALDLCPSDTNKILTGGADKNVVVFDKSSEQILAT. WD repeat units lie at residues 262-301, 304-345, 348-387, 390-429, 433-472, and 473-503; these read GHTK…CVQV, AHES…TKVT, TSGC…NVAN, GHSG…NFKT, DNNF…LHFT, and EHSG…KFYS.

Belongs to the WD repeat PRP19 family. As to quaternary structure, homotetramer. Component of activated, catalytic and post-catalytic spliceosomes. Component of the Prp19 complex/PRP19C/Nineteen complex/NTC and related complexes described as PRP19-CDC5L splicing complex and PSO4 complex. A homotetramer of PRPF19, CDC5L, PLRG1 and BCAS2 constitute the core of those complexes. The interaction with CDC5L, PLRG1 and BCAS2 is direct within this core complex. At least three less stably associated proteins CTNNBL1, CWC15 and HSPA8 are found in the Prp19 complex. The Prp19 complex associates with the spliceosome during its assembly and remodeling recruiting additional proteins. Component of the XAB2 complex, a multimeric protein complex composed of XAB2, PRPF19, AQR, ZNF830, ISY1, and PPIE. Interacts with CWC22 and EIF4A3 in an RNA-independent manner. Interacts with RPA1 and RPA2; the PRP19-CDC5L complex is recruited to the sites of DNA repair where it interacts with the replication protein A complex (RPA). Interacts with SETMAR; required for SETMAR recruitment to site of DNA damage. Interacts with U2AF2; the interaction is direct and recruits the Prp19 complex to RNA polymerase II C-terminal domain (CTD) and the pre-mRNA. Interacts with PRPF3. Interacts with APEX1, DNTT and PSMB4. Interacts with PSMC5. Interacts with KNSTRN. Interacts (via N-terminus) with CDC5L. Interacts with KHDC4. Interacts with USB1. Interacts with DDX41. Ubiquitous. Weakly expressed in senescent cells of different tissue origins. Highly expressed in tumor cell lines.

It is found in the nucleus. It localises to the nucleoplasm. The protein resides in the cytoplasm. The protein localises to the cytoskeleton. Its subcellular location is the spindle. It is found in the lipid droplet. It catalyses the reaction S-ubiquitinyl-[E2 ubiquitin-conjugating enzyme]-L-cysteine + [acceptor protein]-L-lysine = [E2 ubiquitin-conjugating enzyme]-L-cysteine + N(6)-ubiquitinyl-[acceptor protein]-L-lysine.. It functions in the pathway protein modification; protein ubiquitination. Ubiquitin-protein ligase which is a core component of several complexes mainly involved pre-mRNA splicing and DNA repair. Required for pre-mRNA splicing as component of the spliceosome. Core component of the PRP19C/Prp19 complex/NTC/Nineteen complex which is part of the spliceosome and participates in its assembly, its remodeling and is required for its activity. During assembly of the spliceosome, mediates 'Lys-63'-linked polyubiquitination of the U4 spliceosomal protein PRPF3. Ubiquitination of PRPF3 allows its recognition by the U5 component PRPF8 and stabilizes the U4/U5/U6 tri-snRNP spliceosomal complex. Recruited to RNA polymerase II C-terminal domain (CTD) and the pre-mRNA, it may also couple the transcriptional and spliceosomal machineries. The XAB2 complex, which contains PRPF19, is also involved in pre-mRNA splicing, transcription and transcription-coupled repair. Beside its role in pre-mRNA splicing PRPF19, as part of the PRP19-CDC5L complex, plays a role in the DNA damage response/DDR. It is recruited to the sites of DNA damage by the RPA complex where PRPF19 directly ubiquitinates RPA1 and RPA2. 'Lys-63'-linked polyubiquitination of the RPA complex allows the recruitment of the ATR-ATRIP complex and the activation of ATR, a master regulator of the DNA damage response. May also play a role in DNA double-strand break (DSB) repair by recruiting the repair factor SETMAR to altered DNA. As part of the PSO4 complex may also be involved in the DNA interstrand cross-links/ICLs repair process. In addition, may also mediate 'Lys-48'-linked polyubiquitination of substrates and play a role in proteasomal degradation. May play a role in the biogenesis of lipid droplets. May play a role in neural differentiation possibly through its function as part of the spliceosome. The sequence is that of Pre-mRNA-processing factor 19 from Homo sapiens (Human).